Here is a 218-residue protein sequence, read N- to C-terminus: Thiopurine S-methyltransferase (218 aa).

4 residues coordinate S-adenosyl-L-methionine: Trp10, Leu45, Glu66, and Arg123.

It belongs to the class I-like SAM-binding methyltransferase superfamily. TPMT family.

The protein localises to the cytoplasm. The catalysed reaction is S-adenosyl-L-methionine + a thiopurine = S-adenosyl-L-homocysteine + a thiopurine S-methylether.. The sequence is that of Thiopurine S-methyltransferase from Shewanella loihica (strain ATCC BAA-1088 / PV-4).